A 224-amino-acid polypeptide reads, in one-letter code: Uridylate kinase (224 aa).

9 to 10 (GS) lines the ATP pocket. UMP is bound at residue Gly-43. The ATP site is built by Gly-44 and Arg-48. Residues Asp-65 and 113-119 (VVPGQTT) each bind UMP. 3 residues coordinate ATP: Thr-139, Phe-145, and Asp-148.

Belongs to the UMP kinase family. As to quaternary structure, homohexamer.

The protein localises to the cytoplasm. The enzyme catalyses UMP + ATP = UDP + ADP. Its pathway is pyrimidine metabolism; CTP biosynthesis via de novo pathway; UDP from UMP (UMPK route): step 1/1. Inhibited by UTP. In terms of biological role, catalyzes the reversible phosphorylation of UMP to UDP. The sequence is that of Uridylate kinase from Methanocella arvoryzae (strain DSM 22066 / NBRC 105507 / MRE50).